We begin with the raw amino-acid sequence, 314 residues long: Transmembrane protein 248 (314 aa).

A helical membrane pass occupies residues 21-41 (VVFMISVSAMAIAFLTLGYFF). Residues 78–106 (LTNDTTTPESTMTSGQARASTQSPQALED) form a disordered region. Residues 80-102 (NDTTTPESTMTSGQARASTQSPQ) show a composition bias toward polar residues. 3 consecutive transmembrane segments (helical) span residues 179 to 199 (QVVFTACMTLTASPGVFPVTV), 236 to 258 (FWCYKGAIGKVYHALNPKLTVIV), and 270 to 290 (LMHTSYFLFVMVITMFCYAVI).

The protein belongs to the TMEM248 family.

It localises to the membrane. The polypeptide is Transmembrane protein 248 (TMEM248) (Homo sapiens (Human)).